We begin with the raw amino-acid sequence, 825 residues long: NT-3 growth factor receptor (825 aa).

The first 31 residues, 1 to 31 (MDVSLCPAKCSFWRIFLLGSVWLDYVGSVLA), serve as a signal peptide directing secretion. Cystine bridges form between C32–C38 and C36–C45. Over 32–429 (CPANCVCSKT…TVTHKPEEDT (398 aa)) the chain is Extracellular. 3 N-linked (GlcNAc...) asparagine glycosylation sites follow: N68, N72, and N79. LRR repeat units lie at residues 104 to 125 (GLQK…AFAK) and 128 to 149 (HLRY…LFQT). 2 N-linked (GlcNAc...) asparagine glycosylation sites follow: N133 and N163. The LRRCT domain occupies 160-209 (NFFNCSCDIRWMQLWQEQGEAKLNNQNLYCINADGSQLPLFRMNISQCDL). 2 disulfides stabilise this stretch: C164/C189 and C166/C207. Residues N203, N218, N232, N259, N267, N272, and N294 are each glycosylated (N-linked (GlcNAc...) asparagine). Ig-like C2-type domains are found at residues 210-300 (PEIS…VALT) and 309-382 (SLEE…IAKN). Residues C231 and C284 are joined by a disulfide bond. C320 and C362 are oxidised to a cystine. N375 and N388 each carry an N-linked (GlcNAc...) asparagine glycan. The helical transmembrane segment at 430–453 (FGVSIAVGLAAFACVLLVVLFIMI) threads the bilayer. Residues 454–825 (NKYGRRSKFG…ATPIYLDILG (372 aa)) are Cytoplasmic-facing. Position 493 is a phosphoserine (S493). Y516 carries the phosphotyrosine; by autocatalysis modification. Positions 538–825 (IVLKRELGEG…ATPIYLDILG (288 aa)) constitute a Protein kinase domain. ATP contacts are provided by residues 544-552 (LGEGAFGKV) and K572. D679 functions as the Proton acceptor in the catalytic mechanism. Phosphotyrosine; by autocatalysis is present on residues Y705, Y709, and Y710.

This sequence belongs to the protein kinase superfamily. Tyr protein kinase family. Insulin receptor subfamily. As to quaternary structure, exists in a dynamic equilibrium between monomeric (low affinity) and dimeric (high affinity) structures. Binds SH2B2. Interacts with SQSTM1 and KIDINS220. Interacts with PTPRS. Interacts with MAPK8IP3/JIP3. Post-translationally, ligand-mediated auto-phosphorylation.

The protein resides in the membrane. It catalyses the reaction L-tyrosyl-[protein] + ATP = O-phospho-L-tyrosyl-[protein] + ADP + H(+). Receptor tyrosine kinase involved in nervous system and probably heart development. Upon binding of its ligand NTF3/neurotrophin-3, NTRK3 autophosphorylates and activates different signaling pathways, including the phosphatidylinositol 3-kinase/AKT and the MAPK pathways, that control cell survival and differentiation. This is NT-3 growth factor receptor (NTRK3) from Macaca fascicularis (Crab-eating macaque).